The primary structure comprises 391 residues: Processive diacylglycerol beta-glucosyltransferase (391 aa).

Belongs to the glycosyltransferase 28 family. UgtP subfamily.

The protein localises to the cell membrane. It carries out the reaction a 1,2-diacyl-3-O-(beta-D-glucopyranosyl)-sn-glycerol + UDP-alpha-D-glucose = a 1,2-diacyl-3-O-(beta-D-Glc-(1-&gt;6)-beta-D-Glc)-sn-glycerol + UDP + H(+). It catalyses the reaction a 1,2-diacyl-sn-glycerol + UDP-alpha-D-glucose = a 1,2-diacyl-3-O-(beta-D-glucopyranosyl)-sn-glycerol + UDP + H(+). It participates in glycolipid metabolism; diglucosyl-diacylglycerol biosynthesis. Its function is as follows. Processive glucosyltransferase involved in the biosynthesis of both the bilayer- and non-bilayer-forming membrane glucolipids. Is able to successively transfer two glucosyl residues to diacylglycerol (DAG), thereby catalyzing the formation of beta-monoglucosyl-DAG (3-O-(beta-D-glucopyranosyl)-1,2-diacyl-sn-glycerol) and beta-diglucosyl-DAG (3-O-(beta-D-glucopyranosyl-beta-(1-&gt;6)-D-glucopyranosyl)-1,2-diacyl-sn-glycerol). Beta-diglucosyl-DAG is the predominant glycolipid found in Bacillales and is also used as a membrane anchor for lipoteichoic acid (LTA). This chain is Processive diacylglycerol beta-glucosyltransferase, found in Staphylococcus carnosus (strain TM300).